The chain runs to 212 residues: ER lumen protein-retaining receptor 1 (212 aa).

The Lumenal portion of the chain corresponds to 1–4 (MNIF). A helical transmembrane segment spans residues 5-24 (RFLGDISHLSAILILLLKIW). The Cytoplasmic segment spans residues 25–32 (KSRSCAGI). A helical membrane pass occupies residues 33 to 52 (SGKSQLLFAIVFTTRYLDLF). The segment at 47-48 (RY) is interaction with the K-D-E-L motif on target proteins. At 53–58 (TNFISL) the chain is on the lumenal side. The chain crosses the membrane as a helical span at residues 59–79 (YNTSMKMVYVASSYATIWMIY). Residues 80–92 (SKFKATYDGNHDT) are Cytoplasmic-facing. A helical membrane pass occupies residues 93–110 (FRVEFLIVPTAILAFLVN). Residues 111 to 116 (HDFTPL) lie on the Lumenal side of the membrane. The helical transmembrane segment at 117-135 (EILWTFSIYLESVAILPQL) threads the bilayer. At 136-149 (FMVSKTGEAETITS) the chain is on the cytoplasmic side. Residues 150-168 (HYLFALGIYRALYLFNWIW) form a helical membrane-spanning segment. The interval 159-169 (RALYLFNWIWR) is interaction with the K-D-E-L motif on target proteins. Residues 169-178 (RYQFEGFFDL) are Lumenal-facing. The helical transmembrane segment at 179–199 (IAIVAGLVQTVLYCDFFYLYI) threads the bilayer. Residues 200 to 212 (TKVLKGKKLSLPA) lie on the Cytoplasmic side of the membrane. Residues 204–207 (KGKK) form an important for recycling of cargo proteins with the sequence motif K-D-E-L from the Golgi to the endoplasmic reticulum region.

This sequence belongs to the ERD2 family.

The protein resides in the golgi apparatus membrane. It is found in the cytoplasmic vesicle. It localises to the COPI-coated vesicle membrane. Its subcellular location is the endoplasmic reticulum membrane. The protein localises to the endoplasmic reticulum-Golgi intermediate compartment membrane. Functionally, receptor for the C-terminal sequence motif K-D-E-L that is present on endoplasmic reticulum resident proteins and that mediates their recycling from the Golgi back to the endoplasmic reticulum. The protein is ER lumen protein-retaining receptor 1 (kdelr1) of Xenopus tropicalis (Western clawed frog).